The chain runs to 120 residues: MAYAKLGRTSSQRKALLRDLVTDLIINERIETTEAKAKELRPIVEKMITLGKRGDLHARRQAAAFVRNEIADVESGQDAIQKLFADIAPRFAERQGGYTRILKVGPRRGDGAPMAIIEFV.

This sequence belongs to the bacterial ribosomal protein bL17 family. As to quaternary structure, part of the 50S ribosomal subunit. Contacts protein L32.

This Shouchella clausii (strain KSM-K16) (Alkalihalobacillus clausii) protein is Large ribosomal subunit protein bL17.